The following is a 349-amino-acid chain: Probable protease SohB (349 aa).

The Periplasmic segment spans residues 1 to 8 (MELLSEYG). Residues 9 to 29 (LFLAKIVTVVLAIAAIAAIIV) traverse the membrane as a helical segment. Over 30–349 (NVAQRNKRQR…WWQRGQKPLM (320 aa)) the chain is Cytoplasmic. S178 serves as the catalytic Nucleophile. Catalysis depends on K230, which acts as the Proton donor/acceptor.

The protein belongs to the peptidase S49 family.

Its subcellular location is the cell inner membrane. Functionally, multicopy suppressor of the HtrA (DegP) null phenotype. It is possibly a protease, not essential for bacterial viability. The sequence is that of Probable protease SohB (sohB) from Escherichia coli (strain K12).